Here is a 575-residue protein sequence, read N- to C-terminus: Kelch repeat and BTB domain-containing protein 8 (575 aa).

Residues 23–91 enclose the BTB domain; it reads TDIVVEVDHG…AYTSRVILTE (69 aa). The BACK domain maps to 126-228; the sequence is SIGVFIFADH…MEDAFIEKIP (103 aa). 5 Kelch repeats span residues 310 to 364, 365 to 415, 417 to 455, 457 to 506, and 516 to 562; these read DIYI…YCCG, KMYA…EHKE, IYVLQGEFFLFYEPQKDYWGFLTPMTVPRIQGLAAVYKD, IYYI…LFQN, and QVTV…FECA.

It belongs to the KBTBD8 family. As to quaternary structure, component of the BCR(KBTBD8) E3 ubiquitin ligase complex, at least composed of CUL3, KBTBD8 and RBX1.

Its subcellular location is the cytoplasm. The protein localises to the cytoskeleton. It is found in the spindle. It localises to the golgi apparatus. Its function is as follows. Substrate-specific adapter of a BCR (BTB-CUL3-RBX1) E3 ubiquitin ligase complex that acts as a regulator of neural crest specification. The BCR(KBTBD8) complex acts by mediating monoubiquitination of NOLC1 and TCOF1: monoubiquitination promotes the formation of a NOLC1-TCOF1 complex that acts as a platform to connect RNA polymerase I with enzymes responsible for ribosomal processing and modification, leading to remodel the translational program of differentiating cells in favor of neural crest specification. The protein is Kelch repeat and BTB domain-containing protein 8 of Rattus norvegicus (Rat).